Here is a 64-residue protein sequence, read N- to C-terminus: MIDQKLLSILVCPVSKAPLEFVADKQELVCAASGLAYPIRDGIPVMLETEARELTLEEKEQYSH.

The protein belongs to the UPF0434 family.

This is UPF0434 protein TERTU_2813 from Teredinibacter turnerae (strain ATCC 39867 / T7901).